A 425-amino-acid chain; its full sequence is Serine--tRNA ligase (425 aa).

228-230 (TAE) is an L-serine binding site. 259–261 (RSE) is a binding site for ATP. An L-serine-binding site is contributed by Glu282. 346–349 (EIAS) lines the ATP pocket. Ser382 contacts L-serine.

It belongs to the class-II aminoacyl-tRNA synthetase family. Type-1 seryl-tRNA synthetase subfamily. In terms of assembly, homodimer. The tRNA molecule binds across the dimer.

The protein resides in the cytoplasm. It carries out the reaction tRNA(Ser) + L-serine + ATP = L-seryl-tRNA(Ser) + AMP + diphosphate + H(+). The catalysed reaction is tRNA(Sec) + L-serine + ATP = L-seryl-tRNA(Sec) + AMP + diphosphate + H(+). The protein operates within aminoacyl-tRNA biosynthesis; selenocysteinyl-tRNA(Sec) biosynthesis; L-seryl-tRNA(Sec) from L-serine and tRNA(Sec): step 1/1. In terms of biological role, catalyzes the attachment of serine to tRNA(Ser). Is also able to aminoacylate tRNA(Sec) with serine, to form the misacylated tRNA L-seryl-tRNA(Sec), which will be further converted into selenocysteinyl-tRNA(Sec). The sequence is that of Serine--tRNA ligase from Rickettsia felis (strain ATCC VR-1525 / URRWXCal2) (Rickettsia azadi).